A 306-amino-acid polypeptide reads, in one-letter code: MASQLALKSRIASTGSLEKIFNAQEMIAASHIAQARQLALDSKPYTDAIFDAVQTLVSHTHISHPIVKKDEGNPRVAVLALTADRGMAGAYTSSIIRETEDLLARLEGEGKQPQLYVYGRRGVSYYHYRNRPLAQSWEGDTEKPGVEVANAISRALLKAYMEPVDEGGVAELYIVYTEFINMVVQKVRVLRMLPVEVVKEDKSHLNVPDTTTAPQVRPLYSFEPSLDEVLDTVLPRYVRSRIHECLFEAAASEVACRQNAMHTATENARDLINDLTRKLNASRQASITQELTEIIGSADALNKKEE.

The protein belongs to the ATPase gamma chain family. As to quaternary structure, F-type ATPases have 2 components, CF(1) - the catalytic core - and CF(0) - the membrane proton channel. CF(1) has five subunits: alpha(3), beta(3), gamma(1), delta(1), epsilon(1). CF(0) has three main subunits: a, b and c.

The protein localises to the cell membrane. Produces ATP from ADP in the presence of a proton gradient across the membrane. The gamma chain is believed to be important in regulating ATPase activity and the flow of protons through the CF(0) complex. The chain is ATP synthase gamma chain from Bifidobacterium animalis subsp. lactis (strain AD011).